The chain runs to 332 residues: GTP 3',8-cyclase (332 aa).

The region spanning 9–234 is the Radical SAM core domain; the sequence is TFGRRISYLR…DSDHRTGGPS (226 aa). Arg18 contacts GTP. Residues Cys25 and Cys29 each coordinate [4Fe-4S] cluster. S-adenosyl-L-methionine is bound at residue Tyr31. Cys32 lines the [4Fe-4S] cluster pocket. Position 67 (Arg67) interacts with GTP. Residue Gly71 coordinates S-adenosyl-L-methionine. Thr100 is a GTP binding site. Position 124 (Ser124) interacts with S-adenosyl-L-methionine. Lys160 provides a ligand contact to GTP. Met194 serves as a coordination point for S-adenosyl-L-methionine. [4Fe-4S] cluster-binding residues include Cys257 and Cys260. 262-264 is a binding site for GTP; it reads RVR. Residue Cys274 coordinates [4Fe-4S] cluster.

The protein belongs to the radical SAM superfamily. MoaA family. In terms of assembly, monomer and homodimer. Requires [4Fe-4S] cluster as cofactor.

The catalysed reaction is GTP + AH2 + S-adenosyl-L-methionine = (8S)-3',8-cyclo-7,8-dihydroguanosine 5'-triphosphate + 5'-deoxyadenosine + L-methionine + A + H(+). The protein operates within cofactor biosynthesis; molybdopterin biosynthesis. Functionally, catalyzes the cyclization of GTP to (8S)-3',8-cyclo-7,8-dihydroguanosine 5'-triphosphate. In Erythrobacter litoralis (strain HTCC2594), this protein is GTP 3',8-cyclase.